The chain runs to 137 residues: MARTKQTARKSTGGKGPRKELATKAARKTRRPYRGGVKRAHRFRPGTVALREIRKYQKSTDLLIRKLPFQRLVREIAQDFKVDLRFQSHAVLALQEAAEAYLVGLFEDTNLCAIHAKRVTIMSKDIQLARRIRGERA.

Positions 1-36 (MARTKQTARKSTGGKGPRKELATKAARKTRRPYRGG) are disordered. 2 positions are modified to N6,N6,N6-trimethyllysine; alternate: Lys5 and Lys10. N6,N6-dimethyllysine; alternate is present on residues Lys5 and Lys10. N6-methyllysine; alternate occurs at positions 5 and 10. Lys10 is subject to N6-acetyllysine; alternate. Position 11 is a phosphoserine (Ser11). Thr12 carries the phosphothreonine modification. Lys15 is modified (N6-acetyllysine). Residues Lys19, Lys24, Lys28, and Lys38 each carry the N6-methyllysine; alternate modification. N6-acetyllysine; alternate is present on residues Lys19 and Lys24. Residues 25-36 (AARKTRRPYRGG) show a composition bias toward basic residues. An N6,N6,N6-trimethyllysine; alternate mark is found at Lys28 and Lys38. Residues Lys28 and Lys38 each carry the N6,N6-dimethyllysine; alternate modification.

The protein belongs to the histone H3 family. In terms of assembly, the nucleosome is a histone octamer containing two molecules each of H2A, H2B, H3 and H4 assembled in one H3-H4 heterotetramer and two H2A-H2B heterodimers. The octamer wraps approximately 147 bp of DNA. In terms of tissue distribution, pollen specific.

The protein localises to the nucleus. Its subcellular location is the chromosome. Core component of nucleosome. Nucleosomes wrap and compact DNA into chromatin, limiting DNA accessibility to the cellular machineries which require DNA as a template. Histones thereby play a central role in transcription regulation, DNA repair, DNA replication and chromosomal stability. DNA accessibility is regulated via a complex set of post-translational modifications of histones, also called histone code, and nucleosome remodeling. This Arabidopsis thaliana (Mouse-ear cress) protein is Histone H3-like 2 (MGH3).